A 375-amino-acid polypeptide reads, in one-letter code: Holliday junction branch migration complex subunit RuvB (375 aa).

Polar residues predominate over residues 1-22 (MAIVSSKQSPQPDGSKKPSQAK). The interval 1-44 (MAIVSSKQSPQPDGSKKPSQAKSVKKSVEHSKPQQTDALLQPEA) is disordered. The large ATPase domain (RuvB-L) stretch occupies residues 13-218 (DGSKKPSQAK…FGFVQRLRFY (206 aa)). ATP is bound by residues Leu57, Arg58, Gly99, Lys102, Thr103, Thr104, 165–167 (EDF), Arg208, Tyr218, and Arg255. Thr103 contacts Mg(2+). Residues 219–289 (EADELGQIVL…IAQEALELFN (71 aa)) are small ATPAse domain (RuvB-S). The head domain (RuvB-H) stretch occupies residues 292–375 (PCGLDWTDRR…PPDEQMRLLS (84 aa)). Residues Arg347 and Arg352 each coordinate DNA.

It belongs to the RuvB family. As to quaternary structure, homohexamer. Forms an RuvA(8)-RuvB(12)-Holliday junction (HJ) complex. HJ DNA is sandwiched between 2 RuvA tetramers; dsDNA enters through RuvA and exits via RuvB. An RuvB hexamer assembles on each DNA strand where it exits the tetramer. Each RuvB hexamer is contacted by two RuvA subunits (via domain III) on 2 adjacent RuvB subunits; this complex drives branch migration. In the full resolvosome a probable DNA-RuvA(4)-RuvB(12)-RuvC(2) complex forms which resolves the HJ.

It localises to the cytoplasm. It carries out the reaction ATP + H2O = ADP + phosphate + H(+). In terms of biological role, the RuvA-RuvB-RuvC complex processes Holliday junction (HJ) DNA during genetic recombination and DNA repair, while the RuvA-RuvB complex plays an important role in the rescue of blocked DNA replication forks via replication fork reversal (RFR). RuvA specifically binds to HJ cruciform DNA, conferring on it an open structure. The RuvB hexamer acts as an ATP-dependent pump, pulling dsDNA into and through the RuvAB complex. RuvB forms 2 homohexamers on either side of HJ DNA bound by 1 or 2 RuvA tetramers; 4 subunits per hexamer contact DNA at a time. Coordinated motions by a converter formed by DNA-disengaged RuvB subunits stimulates ATP hydrolysis and nucleotide exchange. Immobilization of the converter enables RuvB to convert the ATP-contained energy into a lever motion, pulling 2 nucleotides of DNA out of the RuvA tetramer per ATP hydrolyzed, thus driving DNA branch migration. The RuvB motors rotate together with the DNA substrate, which together with the progressing nucleotide cycle form the mechanistic basis for DNA recombination by continuous HJ branch migration. Branch migration allows RuvC to scan DNA until it finds its consensus sequence, where it cleaves and resolves cruciform DNA. This Acaryochloris marina (strain MBIC 11017) protein is Holliday junction branch migration complex subunit RuvB.